A 261-amino-acid polypeptide reads, in one-letter code: Homeobox-leucine zipper protein HOX24 (261 aa).

Disordered regions lie at residues 42–67 and 160–188; these read AAAA…RKRR and KLNE…NSVM. Positions 46–61 are enriched in gly residues; it reads GRGGGDGDGGGGGGGG. A DNA-binding region (homeobox) is located at residues 61 to 121; it reads GGERKRRFTE…NKRARWRSKQ (61 aa). Residues 120–164 form a leucine-zipper region; sequence KQIEHDYAALRAQYDALHARVESLRQEKLALADQVDELRGKLNER.

The protein belongs to the HD-ZIP homeobox family. Class I subfamily. Expressed in roots and panicles.

The protein localises to the nucleus. Functionally, probable transcription factor. The chain is Homeobox-leucine zipper protein HOX24 (HOX24) from Oryza sativa subsp. japonica (Rice).